The sequence spans 538 residues: MVRSSCLQCDQPSQGSNSTFGCGGPLAAVCATGLLVLVLYSPSSQTANWSAQGISTKALYPAVPVPSTLLPGSAPAKHQLHVWRAHAMSEATTNNSFKQSLFGYNAISSIWLQLAGVAATFFAFGALMAAVTQRKEIAVFSASGQAAEPEGAEPLKRPFPSPAAKPKPLFSTPANSFSNIFQAPPSLRTDSTYGRGPRSTSFTDISNWPSNNALRNPQSVIDIGGGVDFLGDRSPGNPFTRLRGSPSSTLSNLGMGLGLGLGKGKGFGKGFGKGRGFPVEEEVEEEQEVLSWADRRRALADPDAPPMNEDIKYPQLRLVRAVPGGRDEKLGVMSRQEALELAEAEDIDLVLVSIDTDPPVAKLVNYSKLKYESEKKKKDSHKKGKVKEVKELKVSHKIGQHDYDVRVKQARKFLEGGHRIKVSMEFKGRENQFVEIGRAVMKRFQNDLADMGKADAVPKKLGTRLILNLAPAGEALKVIAERRAERDRKAAAEEEGEGDDLDFVDENEDEDVEGEGEEEEAEELEEETAEGTEVPTRS.

The transit peptide at 1-140 (MVRSSCLQCD…VTQRKEIAVF (140 aa)) directs the protein to the chloroplast. Residues 141–290 (SASGQAAEPE…EEVEEEQEVL (150 aa)) are head. Disordered stretches follow at residues 146-165 (AAEP…PAAK) and 188-210 (RTDS…NWPS). Residues 291–474 (SWADRRRALA…LILNLAPAGE (184 aa)) are IF-3 like. The interval 484-538 (AERDRKAAAEEEGEGDDLDFVDENEDEDVEGEGEEEEAEELEEETAEGTEVPTRS) is disordered. Residues 493 to 530 (EEEGEGDDLDFVDENEDEDVEGEGEEEEAEELEEETAE) are compositionally biased toward acidic residues.

The protein belongs to the IF-3 family. Monomer. Post-translationally, the N-terminus is blocked.

The protein resides in the plastid. It is found in the chloroplast. Involved in chloroplast protein synthesis. It enhances the poly(A,U,G)-dependent binding of the initiator tRNA to chloroplast 30S subunits. The protein is Translation initiation factor IF-3, chloroplastic of Euglena gracilis.